A 132-amino-acid chain; its full sequence is MARDPSTLRYAETHEWVDVQEEGGDKFATIGISAFAVEQLNDLVYMDLPEVGRTLEVGEEFGEVESVKAVSPLYSPVAGEVVAVHTDLPDNLDNLNDDAFDFGWILKVKLSADLPETLMDFAAYQKQCSEAG.

One can recognise a Lipoyl-binding domain in the interval 27-109 (FATIGISAFA…FDFGWILKVK (83 aa)). Lysine 68 carries the post-translational modification N6-lipoyllysine.

The protein belongs to the GcvH family. In terms of assembly, the glycine cleavage system is composed of four proteins: P, T, L and H. It depends on (R)-lipoate as a cofactor.

In terms of biological role, the glycine cleavage system catalyzes the degradation of glycine. The H protein shuttles the methylamine group of glycine from the P protein to the T protein. In Rhodopirellula baltica (strain DSM 10527 / NCIMB 13988 / SH1), this protein is Glycine cleavage system H protein.